Reading from the N-terminus, the 354-residue chain is UDP-N-acetylglucosamine--N-acetylmuramyl-(pentapeptide) pyrophosphoryl-undecaprenol N-acetylglucosamine transferase 3 (354 aa).

Residues 12 to 14 (TAG), Arg-163, Ser-193, and Gln-287 each bind UDP-N-acetyl-alpha-D-glucosamine.

The protein belongs to the glycosyltransferase 28 family. MurG subfamily.

It localises to the cell membrane. The enzyme catalyses di-trans,octa-cis-undecaprenyl diphospho-N-acetyl-alpha-D-muramoyl-L-alanyl-D-glutamyl-meso-2,6-diaminopimeloyl-D-alanyl-D-alanine + UDP-N-acetyl-alpha-D-glucosamine = di-trans,octa-cis-undecaprenyl diphospho-[N-acetyl-alpha-D-glucosaminyl-(1-&gt;4)]-N-acetyl-alpha-D-muramoyl-L-alanyl-D-glutamyl-meso-2,6-diaminopimeloyl-D-alanyl-D-alanine + UDP + H(+). The protein operates within cell wall biogenesis; peptidoglycan biosynthesis. In terms of biological role, cell wall formation. Catalyzes the transfer of a GlcNAc subunit on undecaprenyl-pyrophosphoryl-MurNAc-pentapeptide (lipid intermediate I) to form undecaprenyl-pyrophosphoryl-MurNAc-(pentapeptide)GlcNAc (lipid intermediate II). The protein is UDP-N-acetylglucosamine--N-acetylmuramyl-(pentapeptide) pyrophosphoryl-undecaprenol N-acetylglucosamine transferase 3 of Bacillus cereus (strain ATCC 14579 / DSM 31 / CCUG 7414 / JCM 2152 / NBRC 15305 / NCIMB 9373 / NCTC 2599 / NRRL B-3711).